An 801-amino-acid chain; its full sequence is Mitochondrial intermediate peptidase (801 aa).

A mitochondrion-targeting transit peptide spans 1-41; that stretch reads MKDQLLVPLRRRPWTCQKCLQRLQLPRHQTRRSFETAASPF. Residue histidine 564 coordinates Zn(2+). Residue glutamate 565 is part of the active site. Zn(2+)-binding residues include histidine 568 and histidine 571.

It belongs to the peptidase M3 family. The cofactor is Zn(2+).

It is found in the mitochondrion matrix. It carries out the reaction Release of an N-terminal octapeptide as second stage of processing of some proteins imported into the mitochondrion.. In terms of biological role, cleaves proteins, imported into the mitochondrion, to their mature size. While most mitochondrial precursor proteins are processed to the mature form in one step by mitochondrial processing peptidase (MPP), the sequential cleavage by MIP of an octapeptide after initial processing by MPP is a required step for a subgroup of nuclear-encoded precursor proteins destined for the matrix or the inner membrane. In Aspergillus fumigatus (strain CBS 144.89 / FGSC A1163 / CEA10) (Neosartorya fumigata), this protein is Mitochondrial intermediate peptidase (oct1).